Here is a 142-residue protein sequence, read N- to C-terminus: Large ribosomal subunit protein uL13 (142 aa).

This sequence belongs to the universal ribosomal protein uL13 family. In terms of assembly, part of the 50S ribosomal subunit.

Functionally, this protein is one of the early assembly proteins of the 50S ribosomal subunit, although it is not seen to bind rRNA by itself. It is important during the early stages of 50S assembly. This is Large ribosomal subunit protein uL13 from Stenotrophomonas maltophilia (strain R551-3).